The following is a 68-amino-acid chain: Conotoxin Cal12.1p3 (68 aa).

Positions 1 to 21 (DLITNSYTRGKPRHVTSWPKL) are excised as a propeptide.

Post-translationally, contains 4 disulfide bonds. In terms of tissue distribution, expressed by the venom duct.

The protein localises to the secreted. This Californiconus californicus (California cone) protein is Conotoxin Cal12.1p3.